Here is a 566-residue protein sequence, read N- to C-terminus: Nitrate/nitrite sensor protein NarQ (566 aa).

At 1–13 the chain is on the cytoplasmic side; sequence MIVKRPVSASLAR. Residues 14 to 34 form a helical membrane-spanning segment; that stretch reads AFFYIVLLSILSTGIALLTLA. Over 35-146 the chain is Periplasmic; the sequence is SSLRDAEAIN…LALQHYAERK (112 aa). Residues 147 to 167 traverse the membrane as a helical segment; sequence MLLVVAISLAGGIGIFTLVFF. The Cytoplasmic portion of the chain corresponds to 168–566; that stretch reads TLRRIRHQVV…SAEGEESQLM (399 aa). The HAMP domain occupies 174-227; that stretch reads HQVVAPLNQLVTASQRIEHGQFDSPPLDTNLPNELGLLAKTFNQMSSELHKLYR. A Histidine kinase domain is found at 364 to 559; it reads TIARELHDSL…LVSISFRSAE (196 aa). Residue histidine 370 is modified to Phosphohistidine; by autocatalysis.

It localises to the cell inner membrane. It carries out the reaction ATP + protein L-histidine = ADP + protein N-phospho-L-histidine.. Its function is as follows. Acts as a sensor for nitrate/nitrite and transduces signal of nitrate/nitrite availability to the NarL/NarP proteins. NarQ probably activates NarL and NarP by phosphorylation. NarQ probably negatively regulates the NarL protein by dephosphorylation. This is Nitrate/nitrite sensor protein NarQ (narQ) from Escherichia coli (strain K12).